A 377-amino-acid chain; its full sequence is Putative efflux system component YknX (377 aa).

A helical membrane pass occupies residues 3–23 (KVWIGIGIAVIVALFVGINIY). The stretch at 95-187 (TNEQLSLEKE…RVSDLEVKSE (93 aa)) forms a coiled coil.

Belongs to the membrane fusion protein (MFP) (TC 8.A.1) family. In terms of assembly, part of a complex composed of YknX, YknY and YknZ. The complex interacts with YknW.

The protein localises to the cell membrane. Part of an unusual four-component transporter, which is required for protection against the killing factor SdpC (sporulation-delaying protein). The chain is Putative efflux system component YknX (yknX) from Bacillus subtilis (strain 168).